A 685-amino-acid chain; its full sequence is DNA-directed RNA polymerase subunit beta' (685 aa).

Zn(2+) is bound by residues Cys69, Cys71, Cys87, and Cys90. 3 residues coordinate Mg(2+): Asp492, Asp494, and Asp496.

This sequence belongs to the RNA polymerase beta' chain family. RpoC1 subfamily. In plastids the minimal PEP RNA polymerase catalytic core is composed of four subunits: alpha, beta, beta', and beta''. When a (nuclear-encoded) sigma factor is associated with the core the holoenzyme is formed, which can initiate transcription. It depends on Mg(2+) as a cofactor. The cofactor is Zn(2+).

It localises to the plastid. Its subcellular location is the chloroplast. The enzyme catalyses RNA(n) + a ribonucleoside 5'-triphosphate = RNA(n+1) + diphosphate. Its function is as follows. DNA-dependent RNA polymerase catalyzes the transcription of DNA into RNA using the four ribonucleoside triphosphates as substrates. This chain is DNA-directed RNA polymerase subunit beta', found in Dioscorea elephantipes (Elephant's foot yam).